The chain runs to 317 residues: Malate dehydrogenase (317 aa).

NAD(+)-binding positions include 10–15 (GGGQIG) and aspartate 34. 2 residues coordinate substrate: arginine 83 and arginine 89. NAD(+)-binding positions include asparagine 96 and 119–121 (ISN). Residues asparagine 121 and arginine 152 each contribute to the substrate site. The active-site Proton acceptor is the histidine 176.

This sequence belongs to the LDH/MDH superfamily. MDH type 3 family.

It catalyses the reaction (S)-malate + NAD(+) = oxaloacetate + NADH + H(+). Functionally, catalyzes the reversible oxidation of malate to oxaloacetate. The protein is Malate dehydrogenase of Geobacter metallireducens (strain ATCC 53774 / DSM 7210 / GS-15).